The sequence spans 478 residues: Lysine-rich nucleolar protein 1 (478 aa).

The tract at residues 1–231 is disordered; the sequence is MVSKTQKADL…THQEGDILLV (231 aa). K7 is covalently cross-linked (Glycyl lysine isopeptide (Lys-Gly) (interchain with G-Cter in SUMO2)). Residues 17 to 27 are compositionally biased toward basic residues; it reads KKKKKKKKKRV. The span at 33 to 45 shows a compositional bias: polar residues; sequence EPETQYSVLNSND. Residues S51 and S59 each carry the phosphoserine modification. Polar residues predominate over residues 54–63; it reads RATSPSNNVD. 2 stretches are compositionally biased toward basic residues: residues 73 to 82 and 120 to 129; these read SKRKKKKKSC and EKKKKRRKSL. A Glycyl lysine isopeptide (Lys-Gly) (interchain with G-Cter in SUMO2) cross-link involves residue K140. The residue at position 142 (S142) is a Phosphoserine. The span at 143–153 shows a compositional bias: basic and acidic residues; it reads PDPKHAKEVSK. 2 stretches are compositionally biased toward basic residues: residues 154 to 165 and 204 to 222; these read AGRKSKKQRKEK and QKRK…KKKT. K250 is covalently cross-linked (Glycyl lysine isopeptide (Lys-Gly) (interchain with G-Cter in SUMO1); alternate). A Glycyl lysine isopeptide (Lys-Gly) (interchain with G-Cter in SUMO2); alternate cross-link involves residue K250. The interval 258–314 is disordered; it reads PIDSPKAPGKKKVKSKKKVEQPVGEGLAVKRKKKKKKRKENGVKEDPWQEEKEESDT. S261 is subject to Phosphoserine. Residues 265–274 are compositionally biased toward basic residues; the sequence is PGKKKVKSKK. Residues K275 and K287 each participate in a glycyl lysine isopeptide (Lys-Gly) (interchain with G-Cter in SUMO2) cross-link. Basic residues predominate over residues 286–296; it reads VKRKKKKKKRK. The span at 297-307 shows a compositional bias: basic and acidic residues; sequence ENGVKEDPWQE. K309 participates in a covalent cross-link: Glycyl lysine isopeptide (Lys-Gly) (interchain with G-Cter in SUMO2). The tract at residues 310–478 is interaction with ZNF106; that stretch reads EESDTDLEVV…NASKSIKLQD (169 aa). S312 is subject to Phosphoserine. T314 carries the post-translational modification Phosphothreonine. A Glycyl lysine isopeptide (Lys-Gly) (interchain with G-Cter in SUMO2) cross-link involves residue K323. A compositionally biased stretch (basic and acidic residues) spans 340-357; it reads QEEIDRESGKTEASEPKK. The disordered stretch occupies residues 340 to 378; sequence QEEIDRESGKTEASEPKKWTVGLSVKTEASEPKKWTGTQ. Glycyl lysine isopeptide (Lys-Gly) (interchain with G-Cter in SUMO2) cross-links involve residues K373, K393, K395, K427, and K462.

As to quaternary structure, interacts with ZNF106. Expressed in testis.

Its subcellular location is the nucleus. The protein localises to the nucleolus. This Mus musculus (Mouse) protein is Lysine-rich nucleolar protein 1 (Knop1).